The following is a 184-amino-acid chain: MSSNSINVEARAELAELIKELAVVHGEVTLSSGKKADYYIDVRRATLHARASRLIGQLLREATADWDYDAVGGLTLGADPVATAIMHADGRDINAFVVRKEAKKHGMQRRIEGPDLTGKKVLVVEDTTTTGNSPLTAVAALREAGIEVVGVATVVDRATGADEVIAAEGLPYRSLLGLSDLGLN.

5-phospho-alpha-D-ribose 1-diphosphate-binding positions include Arg-99, Lys-100, Lys-103, His-105, and 125–133 (EDTTTTGNS). Thr-129 and Arg-157 together coordinate orotate.

It belongs to the purine/pyrimidine phosphoribosyltransferase family. PyrE subfamily. In terms of assembly, homodimer. It depends on Mg(2+) as a cofactor.

The enzyme catalyses orotidine 5'-phosphate + diphosphate = orotate + 5-phospho-alpha-D-ribose 1-diphosphate. It functions in the pathway pyrimidine metabolism; UMP biosynthesis via de novo pathway; UMP from orotate: step 1/2. Functionally, catalyzes the transfer of a ribosyl phosphate group from 5-phosphoribose 1-diphosphate to orotate, leading to the formation of orotidine monophosphate (OMP). The chain is Orotate phosphoribosyltransferase from Corynebacterium glutamicum (strain R).